We begin with the raw amino-acid sequence, 226 residues long: Ribosomal RNA small subunit methyltransferase G (226 aa).

Residues glycine 83, phenylalanine 88, 136–137 (IE), and arginine 152 each bind S-adenosyl-L-methionine. The interval 199–226 (FSPSQSDPEGSVLKVRGLHGPDGQPHRR) is disordered.

The protein belongs to the methyltransferase superfamily. RNA methyltransferase RsmG family.

It is found in the cytoplasm. It catalyses the reaction guanosine(527) in 16S rRNA + S-adenosyl-L-methionine = N(7)-methylguanosine(527) in 16S rRNA + S-adenosyl-L-homocysteine. Specifically methylates the N7 position of guanine in position 527 of 16S rRNA. The chain is Ribosomal RNA small subunit methyltransferase G from Parvibaculum lavamentivorans (strain DS-1 / DSM 13023 / NCIMB 13966).